We begin with the raw amino-acid sequence, 291 residues long: ATP synthase subunit a (291 aa).

Transmembrane regions (helical) follow at residues 50-70, 108-128, 129-149, 161-181, 203-223, 241-261, and 262-282; these read LDSM…FWIV, IAPL…MDLI, PVDW…GMDP, DPNI…FYSI, PVAK…TFLA, LIFI…SVPW, and AIFH…LTIV.

This sequence belongs to the ATPase A chain family. F-type ATPases have 2 components, CF(1) - the catalytic core - and CF(0) - the membrane proton channel. CF(1) has five subunits: alpha(3), beta(3), gamma(1), delta(1), epsilon(1). CF(0) has three main subunits: a(1), b(2) and c(9-12). The alpha and beta chains form an alternating ring which encloses part of the gamma chain. CF(1) is attached to CF(0) by a central stalk formed by the gamma and epsilon chains, while a peripheral stalk is formed by the delta and b chains.

It localises to the cell inner membrane. In terms of biological role, key component of the proton channel; it plays a direct role in the translocation of protons across the membrane. This chain is ATP synthase subunit a, found in Acinetobacter baumannii (strain AB307-0294).